The primary structure comprises 349 residues: Protein-glutamate methylesterase/protein-glutamine glutaminase (349 aa).

One can recognise a Response regulatory domain in the interval 5–122 (RVLSVDDSAL…REGMLAYSEM (118 aa)). D56 bears the 4-aspartylphosphate mark. The CheB-type methylesterase domain occupies 152 to 344 (LLSSEKLIAI…QQMLAKISAG (193 aa)). Residues S164, H190, and D286 contribute to the active site.

Belongs to the CheB family. In terms of processing, phosphorylated by CheA. Phosphorylation of the N-terminal regulatory domain activates the methylesterase activity.

Its subcellular location is the cytoplasm. The enzyme catalyses [protein]-L-glutamate 5-O-methyl ester + H2O = L-glutamyl-[protein] + methanol + H(+). It carries out the reaction L-glutaminyl-[protein] + H2O = L-glutamyl-[protein] + NH4(+). Involved in chemotaxis. Part of a chemotaxis signal transduction system that modulates chemotaxis in response to various stimuli. Catalyzes the demethylation of specific methylglutamate residues introduced into the chemoreceptors (methyl-accepting chemotaxis proteins or MCP) by CheR. Also mediates the irreversible deamidation of specific glutamine residues to glutamic acid. The sequence is that of Protein-glutamate methylesterase/protein-glutamine glutaminase from Salmonella typhi.